Consider the following 839-residue polypeptide: MSVVGIDLGFLNCYIAVARSGGIETIANEYSDRCTPACISLGSRTRAIGNAAKSQIVTNVRNTIHGFKKLHGRSFDDPIVQTERIRLPYELQKMPNGSAGVKVRYLEEERPFAIEQVTGMLLAKLKETSENALKKPVADCVISIPSFFTDAERRSVMAAAQVAGLNCLRLMNETTAVALAYGIYKQDLPPLDEKPRNVVFIDMGHSAYQVLVCAFNKGKLKVLATTFDPYLGGRNFDEALVDYFCDEFKTKYKINVKENSRALLRLYQECEKLKKLMSANASDLPLNIECFMNDLDVSSKMNRAQFEQLCASLLARVEPPLKAVMEQANLQREDISSIEIVGGATRIPAVKEQITKFFLKDISTTLNADEAVARGCALQCAILSPAFKVREFSITDLVPYSITLRWKTSFEDGSGECEVFCKNHPAPFSKVITFHKKEPFELEAFYTNLHEVPYPDARIGSFTIQNVFPQSDGDSSKVKVKVRVNIHGIFSVASASVIEKQNLEGDHSDAPMETETSFKNENKDNMDKMQVDQEEGHQKCHAEHTPEEEIDHTGAKTKSAVSDKQDRLNQTLKKGKVKSIDLPIQSSLCRQLGQDLLNSYIENEGKMIMQDKLEKERNDAKNAVEEYVYDFRDRLGTVYEKFITPEDLSKLSAVLEDTENWLYEDGEDQPKQVYVDKLQELKKYGQPIQMKYMEHEERPKALNDLGKKIQLVMKVIEAYRNKDERYDHLDPTEMEKVEKCISDAMSWLNSKMNAQNKLSLTQDPVVKVSEIVAKSKELDNFCNPIIYKPKPKAEVPEDKPKANSEHNGPMDGQSGTETKSDSTKDSSQHTKSSGEMEVD.

Residues S74 and S508 each carry the phosphoserine modification. A compositionally biased stretch (basic and acidic residues) spans 503 to 554; that stretch reads LEGDHSDAPMETETSFKNENKDNMDKMQVDQEEGHQKCHAEHTPEEEIDHTG. Residues 503–567 form a disordered region; it reads LEGDHSDAPM…KSAVSDKQDR (65 aa). T545 carries the post-translational modification Phosphothreonine. At S579 the chain carries Phosphoserine. T761 carries the phosphothreonine modification. The interval 786 to 839 is disordered; sequence IYKPKPKAEVPEDKPKANSEHNGPMDGQSGTETKSDSTKDSSQHTKSSGEMEVD. Basic and acidic residues-rich tracts occupy residues 791 to 804 and 818 to 839; these read PKAE…KANS and TKSD…MEVD.

The protein belongs to the heat shock protein 70 family. As to quaternary structure, homodimer.

It is found in the cytoplasm. Its subcellular location is the nucleus. Possesses chaperone activity in vitro where it inhibits aggregation of citrate synthase. This chain is Heat shock 70 kDa protein 4L (HSPA4L), found in Homo sapiens (Human).